We begin with the raw amino-acid sequence, 569 residues long: Hemin/hemoglobin-binding protein 2 (569 aa).

Residues 1–28 (MKKLWKKGLVAFLALTLIFQLIPGFASA) form the signal peptide. NEAT domains lie at 34-173 (KDGG…FKVI), 184-307 (LSDG…ATAA), and 360-484 (LNNH…IKDI). Residues 204–205 (SS), Y280, and Y289 each bind heme. Residues 307–357 (ASSYPGSDETPPVVNPGETNPPVTKPDPGTTNPPVTTPPTTPSKPAVVDPK) are disordered. Residues 502–511 (TGNVASNNNA) are compositionally biased toward polar residues. Residues 502–537 (TGNVASNNNAGPKLAKPDFDDTNSVQKTASKTEKNA) are disordered. The NXZTN sorting signal motif lies at 536–540 (NAKTN). Residue T539 is modified to Pentaglycyl murein peptidoglycan amidated threonine. The propeptide at 540–569 (NDSSSMVWYITLFGASFLYLAYRLKRKRLS) is removed by sortase B.

Its subcellular location is the cell surface. It localises to the secreted. The protein localises to the cell wall. With respect to regulation, is overexpressed in mecA, clpC and clpP mutants, suggesting the protein level is controlled by MecA, ClpC and ClpP (at protein level). Functionally, acts as an extracellular and cell wall-bound hemophore; scavenges host heme and hemoglobin from the environment and also serves as a cell wall receptor for both. At low hemin (Hn) and hemoglobin (Hb) concentrations adsorbs Hn/Hb and presumably directs it to membrane transporters. Soluble Hbp2 can probably pass Hn/Hb to cell wall-anchored Hbp2, and both forms can accept Hn/Hb from Hbp1. May be involved in crossing the digestive barrier in infected animals. Binds host hemin. Binds host hemoglobin with affinity in the nanomolar range. The polypeptide is Hemin/hemoglobin-binding protein 2 (Listeria monocytogenes serovar 1/2a (strain ATCC BAA-679 / EGD-e)).